The chain runs to 680 residues: MGRIKKKGESGAAKNYITRTQAVRKLQISLPDFRKLCIWKGIYPREPRNKKKVSKSATASTTFYYTKDIQYLLHEPLLAKFRDQKVLEKKISRALGRGDVSDAKRLEGNAARPENTGKPSYTLDHVVRERYPTFVDALRDLDDCLSMLFLFANLPATSSVPAKMIARCERLCLEFQHYLIVSHSLQKSFLSIKGIYYQANIQGEDILWLVPYKFNQRVVGDIDFRIMGTFIEFYMTLLGFVNFRLYTSIGLKYPPKFDATKDDKAADLAAFTLEGAGLTSNGAQPDAIMEGTSESTPDPKLQAKVNKLVKELKSGEDEKPKAITNGEGESETPTDAIDKFEPAAPGGDVLLQPSYSTSDPSQLFANCTIYLSREAPRQALEFILRAFGCKRIGWDEVLGDGAFTTNELDPNITHQIVDRPPVTAVDNDEGEDNQTAQKVGGRVPGRIYVQPQWVWDSINDEELKEPNQYAPGAQLPPHLSPFVKARAGQYDPTVPLEEQQTEAEALKGDSDVEDEEEADGAEADEDDDEAVLAIENGEMDVAGSDDDDDEEDEEADAGFGGFSDAEVDDASEDDEQTSAALQRQIELEAELSGKSVKASEADKQAADPKSKAKQQKRKELQRKAKEEAEDLERAKGMLSKKKRKLFEQMTYSNNKKDAESEKLREKRRRIERKMAKGKAT.

A disordered region spans residues 315-336; it reads GEDEKPKAITNGEGESETPTDA. The region spanning 359 to 471 is the BRCT domain; it reads DPSQLFANCT…ELKEPNQYAP (113 aa). Residues 494–680 are disordered; the sequence is VPLEEQQTEA…ERKMAKGKAT (187 aa). Acidic residues-rich tracts occupy residues 511 to 530, 543 to 556, and 565 to 576; these read DVEDEEEADGAEADEDDDEA, GSDDDDDEEDEEAD, and AEVDDASEDDEQ. Composition is skewed to basic and acidic residues over residues 597–610, 617–635, and 654–664; these read KASEADKQAADPKS, RKELQRKAKEEAEDLERAK, and NKKDAESEKLR. The stretch at 609–680 forms a coiled coil; sequence KSKAKQQKRK…ERKMAKGKAT (72 aa). The segment covering 665 to 680 has biased composition (basic residues); it reads EKRRRIERKMAKGKAT.

This sequence belongs to the pescadillo family. In terms of assembly, component of the NOP7 complex, composed of ERB1, NOP7 and YTM1. The complex is held together by ERB1, which interacts with NOP7 via its N-terminal domain and with YTM1 via a high-affinity interaction between the seven-bladed beta-propeller domains of the 2 proteins. The NOP7 complex associates with the 66S pre-ribosome.

Its subcellular location is the nucleus. It is found in the nucleolus. The protein localises to the nucleoplasm. Its function is as follows. Component of the NOP7 complex, which is required for maturation of the 25S and 5.8S ribosomal RNAs and formation of the 60S ribosome. The protein is Pescadillo homolog of Pyricularia oryzae (strain 70-15 / ATCC MYA-4617 / FGSC 8958) (Rice blast fungus).